Reading from the N-terminus, the 458-residue chain is Probable multidrug resistance protein NorM (458 aa).

The next 12 helical transmembrane spans lie at 14–34 (FLVV…MNFF), 56–76 (LWVP…PIIA), 97–117 (LSIA…DPIL), 134–154 (LIGL…RCLI), 164–184 (MFIT…LIFG), 196–216 (AGYA…VVVV), 241–261 (ILLL…IFAA), 283–303 (FASF…IAVG), 320–340 (LGIT…YVLR), 353–373 (VAWL…SDAL), 389–409 (VPFV…GYLL), and 415–435 (LGPY…AIAL).

This sequence belongs to the multi antimicrobial extrusion (MATE) (TC 2.A.66.1) family.

Its subcellular location is the cell membrane. In terms of biological role, multidrug efflux pump. In Halalkalibacterium halodurans (strain ATCC BAA-125 / DSM 18197 / FERM 7344 / JCM 9153 / C-125) (Bacillus halodurans), this protein is Probable multidrug resistance protein NorM (norM).